Here is a 410-residue protein sequence, read N- to C-terminus: LL-diaminopimelate aminotransferase (410 aa).

2 residues coordinate substrate: Tyr-15 and Gly-42. Pyridoxal 5'-phosphate contacts are provided by residues Tyr-72, Ala-108–Lys-109, Tyr-132, Asn-188, Tyr-219, and Ser-247–Ser-249. Residues Lys-109, Tyr-132, and Asn-188 each coordinate substrate. Lys-250 carries the post-translational modification N6-(pyridoxal phosphate)lysine. Arg-258 and Asn-293 together coordinate pyridoxal 5'-phosphate. Positions 293 and 389 each coordinate substrate.

It belongs to the class-I pyridoxal-phosphate-dependent aminotransferase family. LL-diaminopimelate aminotransferase subfamily. As to quaternary structure, homodimer. Pyridoxal 5'-phosphate is required as a cofactor.

The enzyme catalyses (2S,6S)-2,6-diaminopimelate + 2-oxoglutarate = (S)-2,3,4,5-tetrahydrodipicolinate + L-glutamate + H2O + H(+). It participates in amino-acid biosynthesis; L-lysine biosynthesis via DAP pathway; LL-2,6-diaminopimelate from (S)-tetrahydrodipicolinate (aminotransferase route): step 1/1. Involved in the synthesis of meso-diaminopimelate (m-DAP or DL-DAP), required for both lysine and peptidoglycan biosynthesis. Catalyzes the direct conversion of tetrahydrodipicolinate to LL-diaminopimelate. This chain is LL-diaminopimelate aminotransferase, found in Bacteroides fragilis (strain YCH46).